The following is a 372-amino-acid chain: Alanine dehydrogenase 1 (372 aa).

His94 is an active-site residue. 170 to 200 provides a ligand contact to NAD(+); it reads TYVIFGGGVAATNAANVALGLNAKVIIIELN.

This sequence belongs to the AlaDH/PNT family.

The catalysed reaction is L-alanine + NAD(+) + H2O = pyruvate + NH4(+) + NADH + H(+). The protein operates within amino-acid degradation; L-alanine degradation via dehydrogenase pathway; NH(3) and pyruvate from L-alanine: step 1/1. May play a role in cell wall synthesis as L-alanine is an important constituent of the peptidoglycan layer. The protein is Alanine dehydrogenase 1 (ald1) of Staphylococcus aureus (strain USA300).